A 385-amino-acid polypeptide reads, in one-letter code: Galactokinase (385 aa).

34 to 37 (EHTD) contacts substrate. 124–130 (SSGLSSS) is an ATP binding site. Mg(2+) contacts are provided by Ser130 and Glu162. The active-site Proton acceptor is Asp174. Tyr223 is a substrate binding site.

It belongs to the GHMP kinase family. GalK subfamily.

Its subcellular location is the cytoplasm. The catalysed reaction is alpha-D-galactose + ATP = alpha-D-galactose 1-phosphate + ADP + H(+). Its pathway is carbohydrate metabolism; galactose metabolism. Functionally, catalyzes the transfer of the gamma-phosphate of ATP to D-galactose to form alpha-D-galactose-1-phosphate (Gal-1-P). This chain is Galactokinase, found in Mannheimia succiniciproducens (strain KCTC 0769BP / MBEL55E).